A 434-amino-acid polypeptide reads, in one-letter code: MLPARCARLLTPHLLLVLVQLSPARGHRTTGPRFLISDRDPQCNLHCSRTQPKPICASDGRSYESMCEYQRAKCRDPTLGVVHRGRCKDAGQSKCRLERAQALEQAKKPQEAVFVPECGEDGSFTQVQCHTYTGYCWCVTPDGKPISGSSVQNKTPVCSGSVTDKPLSQGNSGRKDDGSKPTPTMETQPVFDGDEITAPTLWIKHLVIKDSKLNNTNIRNSEKVYSCDQERQSALEEAQQNPREGIVIPECAPGGLYKPVQCHQSTGYCWCVLVDTGRPLPGTSTRYVMPSCESDARAKTTEADDPFKDRELPGCPEGKKMEFITSLLDALTTDMVQAINSAAPTGGGRFSEPDPSHTLEERVVHWYFSQLDSNSSNDINKREMKPFKRYVKKKAKPKKCARRFTDYCDLNKDKVISLPELKGCLGVSKEGRLV.

The signal sequence occupies residues 1–26; that stretch reads MLPARCARLLTPHLLLVLVQLSPARG. Residues 37–89 enclose the Kazal-like domain; it reads SDRDPQCNLHCSRTQPKPICASDGRSYESMCEYQRAKCRDPTLGVVHRGRCKD. Disulfide bonds link Cys43–Cys74, Cys47–Cys67, Cys56–Cys87, Cys95–Cys118, Cys129–Cys136, and Cys138–Cys158. Residues 92–158 enclose the Thyroglobulin type-1 1 domain; that stretch reads QSKCRLERAQ…SSVQNKTPVC (67 aa). Residues 149 to 172 show a composition bias toward polar residues; that stretch reads SSVQNKTPVCSGSVTDKPLSQGNS. The tract at residues 149 to 191 is disordered; the sequence is SSVQNKTPVCSGSVTDKPLSQGNSGRKDDGSKPTPTMETQPVF. The N-linked (GlcNAc...) asparagine glycan is linked to Asn214. One can recognise a Thyroglobulin type-1 2 domain in the interval 224 to 292; sequence VYSCDQERQS…TSTRYVMPSC (69 aa). 3 disulfides stabilise this stretch: Cys227/Cys251, Cys262/Cys269, and Cys271/Cys292. 2 consecutive EF-hand domains span residues 359-394 and 396-431; these read LEER…VKKK and KPKK…SKEG. Residues Asp372, Asn374, Ser376, Asp378, Glu383, Asp409, Asn411, Asp413, and Glu420 each coordinate Ca(2+). Asn374 is a glycosylation site (N-linked (GlcNAc...) asparagine).

Glycosylated. Widely expressed in many tissues with a strongest signal in ovary. No expression in spleen.

Its subcellular location is the secreted. It localises to the extracellular space. The protein resides in the extracellular matrix. It is found in the basement membrane. Its function is as follows. Plays essential roles in both eye and limb development. Probable regulator of osteoblast differentiation. In Homo sapiens (Human), this protein is SPARC-related modular calcium-binding protein 1 (SMOC1).